A 487-amino-acid polypeptide reads, in one-letter code: Anthocyanidin 3-O-glucosyltransferase 5 (487 aa).

His22 serves as the catalytic Proton acceptor. An an anthocyanidin-binding site is contributed by His22. The active-site Charge relay is Asp119. The UDP-alpha-D-glucose site is built by Gln354, His369, Trp372, Asn373, Ser374, and Glu377. Ala392 contacts an anthocyanidin. UDP-alpha-D-glucose is bound by residues Glu393 and Gln394.

Belongs to the UDP-glycosyltransferase family. Faintly expressed in cotyledons.

The enzyme catalyses an anthocyanidin + UDP-alpha-D-glucose + H(+) = an anthocyanidin 3-O-beta-D-glucoside + UDP. It participates in pigment biosynthesis; anthocyanin biosynthesis. In terms of biological role, in the presence of other necessary color factors, this glycosylation reaction allows the accumulation of anthocyanin pigments. The chain is Anthocyanidin 3-O-glucosyltransferase 5 (GT5) from Manihot esculenta (Cassava).